An 843-amino-acid chain; its full sequence is Protein translocase subunit SecA (843 aa).

ATP-binding positions include glutamine 85, 103–107 (GEGKT), and aspartate 490. The interval 799 to 834 (KNAVENRSDDSLPKQPVKAEPRVGRNDPCPCGSGKK) is disordered. Over residues 802–823 (VENRSDDSLPKQPVKAEPRVGR) the composition is skewed to basic and acidic residues. Cysteine 827, cysteine 829, cysteine 838, and cysteine 839 together coordinate Zn(2+).

This sequence belongs to the SecA family. Monomer and homodimer. Part of the essential Sec protein translocation apparatus which comprises SecA, SecYEG and auxiliary proteins SecDF. Other proteins may also be involved. Requires Zn(2+) as cofactor.

It is found in the cell membrane. The protein resides in the cytoplasm. The catalysed reaction is ATP + H2O + cellular proteinSide 1 = ADP + phosphate + cellular proteinSide 2.. Its function is as follows. Part of the Sec protein translocase complex. Interacts with the SecYEG preprotein conducting channel. Has a central role in coupling the hydrolysis of ATP to the transfer of proteins into and across the cell membrane, serving as an ATP-driven molecular motor driving the stepwise translocation of polypeptide chains across the membrane. The sequence is that of Protein translocase subunit SecA from Heliobacterium modesticaldum (strain ATCC 51547 / Ice1).